Reading from the N-terminus, the 357-residue chain is UDP-xylose transporter 3 (357 aa).

The next 10 membrane-spanning stretches (helical) occupy residues 7–27 (FQLG…SIVI), 31–51 (ALIS…HLLV), 75–95 (VMGF…SLGF), 100–120 (FYQM…TLFF), 132–152 (LTIL…LNML), 154–174 (SVLS…TNTI), 194–214 (AITL…QNVF), 224–244 (FFIV…FLVI), 250–270 (VTYQ…GYVL), and 280–300 (ILGI…CSIE). S334 is modified (phosphoserine).

Belongs to the TPT transporter family. TPT (TC 2.A.7.9) subfamily. As to expression, ubiquitous.

The protein resides in the golgi apparatus membrane. Nucleotide-sugar transporter that transports UDP-xylose and UMP in a strict counter-exchange mode. The sequence is that of UDP-xylose transporter 3 from Arabidopsis thaliana (Mouse-ear cress).